Reading from the N-terminus, the 614-residue chain is Translation initiation factor IF-2 (614 aa).

The tr-type G domain occupies 115-283 (ARAPIVTIMG…ILLIAELNDY (169 aa)). The interval 124–131 (GHVDHGKT) is G1. 124–131 (GHVDHGKT) is a GTP binding site. Residues 149 to 153 (GITQH) form a G2 region. The segment at 170-173 (DTPG) is G3. GTP contacts are provided by residues 170–174 (DTPGH) and 224–227 (NKMD). A G4 region spans residues 224–227 (NKMD). Residues 260–262 (SAL) form a G5 region.

Belongs to the TRAFAC class translation factor GTPase superfamily. Classic translation factor GTPase family. IF-2 subfamily.

It localises to the cytoplasm. Its function is as follows. One of the essential components for the initiation of protein synthesis. Protects formylmethionyl-tRNA from spontaneous hydrolysis and promotes its binding to the 30S ribosomal subunits. Also involved in the hydrolysis of GTP during the formation of the 70S ribosomal complex. The polypeptide is Translation initiation factor IF-2 (Ureaplasma urealyticum serovar 10 (strain ATCC 33699 / Western)).